A 213-amino-acid polypeptide reads, in one-letter code: Orotidine 5'-phosphate decarboxylase (213 aa).

Residues aspartate 6, lysine 25, 52-61, serine 109, 158-168, glycine 181, and arginine 182 contribute to the substrate site; these read DLKLADIDNT and PGVGAQGAMIG. Residue lysine 54 is the Proton donor of the active site.

Belongs to the OMP decarboxylase family. Type 1 subfamily. In terms of assembly, homodimer.

It carries out the reaction orotidine 5'-phosphate + H(+) = UMP + CO2. It participates in pyrimidine metabolism; UMP biosynthesis via de novo pathway; UMP from orotate: step 2/2. Its function is as follows. Catalyzes the decarboxylation of orotidine 5'-monophosphate (OMP) to uridine 5'-monophosphate (UMP). The chain is Orotidine 5'-phosphate decarboxylase from Sulfurisphaera tokodaii (strain DSM 16993 / JCM 10545 / NBRC 100140 / 7) (Sulfolobus tokodaii).